The sequence spans 445 residues: Exodeoxyribonuclease 7 large subunit (445 aa).

The protein belongs to the XseA family. Heterooligomer composed of large and small subunits.

It localises to the cytoplasm. The catalysed reaction is Exonucleolytic cleavage in either 5'- to 3'- or 3'- to 5'-direction to yield nucleoside 5'-phosphates.. Bidirectionally degrades single-stranded DNA into large acid-insoluble oligonucleotides, which are then degraded further into small acid-soluble oligonucleotides. The chain is Exodeoxyribonuclease 7 large subunit from Staphylococcus saprophyticus subsp. saprophyticus (strain ATCC 15305 / DSM 20229 / NCIMB 8711 / NCTC 7292 / S-41).